The chain runs to 113 residues: Retrotransposon Gag-like protein 8A (113 aa).

The protein belongs to the FAM127 family.

The polypeptide is Retrotransposon Gag-like protein 8A (Homo sapiens (Human)).